Reading from the N-terminus, the 1256-residue chain is MAKKFNYKLPSMVALTLVGSAVTAHQVQAAETTQDQTTNKNVLDSNKVKATTEQAKAEVKNPTQNISGTQVYQDPAIVQPKTANNKTGNAQVSQKVDTAQVNGDTRANQSATTNNTQPVAKSTSTTAPKTNTNVTNAGYSLVDDEDDNSENQINPELIKSAAKPAALETQYKTAAPKAATTSAPKAKTEATPKVTTFSASAQPRSVAATPKTSLPKYKPQVNSSINDYICKNNLKAPKIEEDYTSYFPKYAYRNGVGRPEGIVVHDTANDRSTINGEISYMKNNYQNAFVHAFVDGDRIIETAPTDYLSWGVGAVGNPRFINVEIVHTHDYASFARSMNNYADYAATQLQYYGLKPDSAEYDGNGTVWTHYAVSKYLGGTDHADPHGYLRSHNYSYDQLYDLINEKYLIKMGKVAPWGTQSTTTPTTPSKPTTPSKPSTGKLTVAANNGVAQIKPTNSGLYTTVYDKTGKATNEVQKTFAVSKTATLGNQKFYLVQDYNSGNKFGWVKEGDVVYNTAKSPVNVNQSYSIKPGTKLYTVPWGTSKQVAGSVSGSGNQTFKASKQQQIDKSIYLYGSVNGKSGWVSKAYLVDTAKPTPTPTPKPSTPTTNNKLTVSSLNGVAQINAKNNGLFTTVYDKTGKPTKEVQKTFAVTKEASLGGNKFYLVKDYNSPTLIGWVKQGDVIYNNAKSPVNVMQTYTVKPGTKLYSVPWGTYKQEAGAVSGTGNQTFKATKQQQIDKSIYLFGTVNGKSGWVSKAYLAVPAAPKKAVAQPKTAVKAYTVTKPQTTQTVSKIAQVKPNNTGIRASVYEKTAKNGAKYADRTFYVTKERAHGNETYVLLNNTSHNIPLGWFNVKDLNVQNLGKEVKTTQKYTVNKSNNGLSMVPWGTKNQVILTGNNIAQGTFNATKQVSVGKDVYLYGTINNRTGWVNAKDLTAPTAVKPTTSAAKDYNYTYVIKNGNGYYYVTPNSDTAKYSLKAFNEQPFAVVKEQVINGQTWYYGKLSNGKLAWIKSTDLAKELIKYNQTGMTLNQVAQIQAGLQYKPQVQRVPGKWTDAKFNDVKHAMDTKRLAQDPALKYQFLRLDQPQNISIDKINQFLKGKGVLENQGAAFNKAAQMYGINEVYLISHALLETGNGTSQLAKGADVVNNKVVTNSNTKYHNVFGIAAYDNDPLREGIKYAKQAGWDTVSKAIVGGAKFIGNSYVKAGQNTLYKMRWNPAHPGTHQYATDVDWANINAKIIKGYYDKIGEVGKYFDIPQYK.

Residues 1–29 form the signal peptide; that stretch reads MAKKFNYKLPSMVALTLVGSAVTAHQVQA. The segment covering 103–138 has biased composition (polar residues); it reads GDTRANQSATTNNTQPVAKSTSTTAPKTNTNVTNAG. Disordered stretches follow at residues 103 to 151, 172 to 214, and 419 to 440; these read GDTR…NSEN, KTAA…KTSL, and TQSTTTPTTPSKPTTPSKPSTG. 2 stretches are compositionally biased toward low complexity: residues 172–196 and 421–439; these read KTAAPKAATTSAPKAKTEATPKVTT and STTTPTTPSKPTTPSKPST. The tract at residues 199–775 is N-acetylmuramoyl-L-alanine amidase; the sequence is ASAQPRSVAA…AVAQPKTAVK (577 aa). 7 consecutive GW domains span residues 443-517, 519-593, 612-686, 688-762, 784-859, 861-936, and 943-1017; these read TVAA…YNTA, SPVN…DTAK, TVSS…YNNA, SPVN…VPAA, TTQT…VQNL, KEVK…APTA, and AAKD…KELI. Positions 776–1256 are endo-beta-N-acetylglucosaminidase; the sequence is AYTVTKPQTT…GKYFDIPQYK (481 aa).

In the N-terminal section; belongs to the N-acetylmuramoyl-L-alanine amidase 2 family. The protein in the C-terminal section; belongs to the glycosyl hydrolase 73 family. In terms of assembly, oligomer; forms a ring structure at the cell surface which is important for efficient partitioning of daughter cells after cell division. Post-translationally, undergoes proteolytic processing to generate the two extracellular lytic enzymes, probably at the septal region on the cell surface.

The protein resides in the secreted. The catalysed reaction is Hydrolyzes the link between N-acetylmuramoyl residues and L-amino acid residues in certain cell-wall glycopeptides.. The enzyme catalyses an N(4)-(oligosaccharide-(1-&gt;3)-[oligosaccharide-(1-&gt;6)]-beta-D-Man-(1-&gt;4)-beta-D-GlcNAc-(1-&gt;4)-alpha-D-GlcNAc)-L-asparaginyl-[protein] + H2O = an oligosaccharide-(1-&gt;3)-[oligosaccharide-(1-&gt;6)]-beta-D-Man-(1-&gt;4)-D-GlcNAc + N(4)-(N-acetyl-beta-D-glucosaminyl)-L-asparaginyl-[protein]. Its function is as follows. Endohydrolysis of the di-N-acetylchitobiosyl unit in high-mannose glycopeptides and glycoproteins containing the -[(Man)5(GlcNAc)2]-Asn structure. One N-acetyl-D-glucosamine residue remains attached to the protein; the rest of the oligosaccharide is released intact. Cleaves the peptidoglycan connecting the daughter cells at the end of the cell division cycle, resulting in the separation of the two newly divided cells. Acts as an autolysin in penicillin-induced lysis. The sequence is that of Bifunctional autolysin (atl) from Staphylococcus aureus (strain NCTC 8325 / PS 47).